The following is a 173-amino-acid chain: Small ribosomal subunit protein uS5 (173 aa).

The S5 DRBM domain maps to 17 to 80 (WQERVIQIRR…ADGKKQLIEV (64 aa)).

This sequence belongs to the universal ribosomal protein uS5 family. As to quaternary structure, part of the 30S ribosomal subunit. Contacts proteins S4 and S8.

In terms of biological role, with S4 and S12 plays an important role in translational accuracy. Its function is as follows. Located at the back of the 30S subunit body where it stabilizes the conformation of the head with respect to the body. The protein is Small ribosomal subunit protein uS5 of Microcystis aeruginosa (strain NIES-843 / IAM M-2473).